A 712-amino-acid chain; its full sequence is Glycine--tRNA ligase beta subunit (712 aa).

This sequence belongs to the class-II aminoacyl-tRNA synthetase family. As to quaternary structure, tetramer of two alpha and two beta subunits.

Its subcellular location is the cytoplasm. The catalysed reaction is tRNA(Gly) + glycine + ATP = glycyl-tRNA(Gly) + AMP + diphosphate. In Acaryochloris marina (strain MBIC 11017), this protein is Glycine--tRNA ligase beta subunit.